A 216-amino-acid polypeptide reads, in one-letter code: Pyrophosphatase PpaX (216 aa).

The active-site Nucleophile is Asp9.

The protein belongs to the HAD-like hydrolase superfamily. PpaX family. Requires Mg(2+) as cofactor.

It carries out the reaction diphosphate + H2O = 2 phosphate + H(+). Functionally, hydrolyzes pyrophosphate formed during P-Ser-HPr dephosphorylation by HPrK/P. Might play a role in controlling the intracellular pyrophosphate pool. The protein is Pyrophosphatase PpaX of Bacillus anthracis (strain A0248).